The sequence spans 271 residues: Putative pyruvate, phosphate dikinase regulatory protein 2 (271 aa).

Residue 151 to 158 (GVSRTSKT) participates in ADP binding.

Belongs to the pyruvate, phosphate/water dikinase regulatory protein family. PDRP subfamily.

The enzyme catalyses N(tele)-phospho-L-histidyl/L-threonyl-[pyruvate, phosphate dikinase] + ADP = N(tele)-phospho-L-histidyl/O-phospho-L-threonyl-[pyruvate, phosphate dikinase] + AMP + H(+). The catalysed reaction is N(tele)-phospho-L-histidyl/O-phospho-L-threonyl-[pyruvate, phosphate dikinase] + phosphate + H(+) = N(tele)-phospho-L-histidyl/L-threonyl-[pyruvate, phosphate dikinase] + diphosphate. Its function is as follows. Bifunctional serine/threonine kinase and phosphorylase involved in the regulation of the pyruvate, phosphate dikinase (PPDK) by catalyzing its phosphorylation/dephosphorylation. This is Putative pyruvate, phosphate dikinase regulatory protein 2 from Staphylococcus haemolyticus (strain JCSC1435).